Here is a 274-residue protein sequence, read N- to C-terminus: MEKPPVDPQNPWLELRRLTPARIALGRTGTSLPTRAQLDFQYAHAQARDAVHLPFDHAALSAQLNERQRESLLLHSAAVDRNSYLQRPDLGRKLSDQSAQTLREYAQAHPGGVDLVIVVADGLSALAVHRHTLPFLTRLEEQMSADEWSTAPVVLVEQGRVAIGDEIGQLLGAKMVVMLIGERPGLSSPDSLGLYFTYNPKVGLTDAYRNCISNVRLEGLSYGMAAHRLLYLMREACRRQLSGVNLKDEAQVQTLESEAGTDMKSNFLLDPPPA.

Positions 161, 182, and 211 each coordinate adenosylcob(III)alamin.

It belongs to the EutC family. As to quaternary structure, the basic unit is a heterodimer which dimerizes to form tetramers. The heterotetramers trimerize; 6 large subunits form a core ring with 6 small subunits projecting outwards. It depends on adenosylcob(III)alamin as a cofactor.

It localises to the bacterial microcompartment. The enzyme catalyses ethanolamine = acetaldehyde + NH4(+). It participates in amine and polyamine degradation; ethanolamine degradation. In terms of biological role, catalyzes the deamination of various vicinal amino-alcohols to oxo compounds. Allows this organism to utilize ethanolamine as the sole source of nitrogen and carbon in the presence of external vitamin B12. This is Ethanolamine ammonia-lyase small subunit from Pseudomonas fluorescens (strain Pf0-1).